We begin with the raw amino-acid sequence, 327 residues long: Serine/threonine-protein phosphatase PP1-beta catalytic subunit (327 aa).

A2 is modified (N-acetylalanine). Mn(2+) contacts are provided by D63, H65, D91, and N123. H124 acts as the Proton donor in catalysis. Positions 172 and 247 each coordinate Mn(2+). The interval 305–327 (QYGGLNSGRPVTPPRTANPPKKR) is disordered.

This sequence belongs to the PPP phosphatase family. PP-1 subfamily. Mn(2+) serves as cofactor.

It localises to the cytoplasm. The protein localises to the nucleus. The catalysed reaction is O-phospho-L-seryl-[protein] + H2O = L-seryl-[protein] + phosphate. The enzyme catalyses O-phospho-L-threonyl-[protein] + H2O = L-threonyl-[protein] + phosphate. Functionally, protein phosphatase that associates with over 200 regulatory proteins to form highly specific holoenzymes which dephosphorylate hundreds of biological targets. Protein phosphatase (PP1) is essential for cell division, it participates in the regulation of glycogen metabolism, muscle contractility and protein synthesis. Involved in regulation of ionic conductances and long-term synaptic plasticity. This chain is Serine/threonine-protein phosphatase PP1-beta catalytic subunit (ppp1cb), found in Xenopus laevis (African clawed frog).